The chain runs to 520 residues: Translation initiation factor IF3-1, mitochondrial (520 aa).

A mitochondrion-targeting transit peptide spans 1-66 (MAIWRIINRS…SNIFQNLRFL (66 aa)). The segment covering 271-282 (ARVKEESPKPDS) has biased composition (basic and acidic residues). The tract at residues 271–520 (ARVKEESPKP…YGIFSTPKTK (250 aa)) is disordered. The span at 336 to 361 (EPQSPNQHVNPQRPRFSNQAPNQQPT) shows a compositional bias: polar residues. Over residues 369–379 (PNQPPSAPRPQ) the composition is skewed to pro residues. 2 stretches are compositionally biased toward polar residues: residues 404–422 (NQAPNQQSTGRFNPQFPNQ) and 458–468 (FQNQAPNQQPT). The span at 473–485 (PQPPNPPRAPPRP) shows a compositional bias: pro residues.

Belongs to the IF-3 family. As to quaternary structure, monomer.

It is found in the mitochondrion. Its function is as follows. IF-3 binds to the 30S ribosomal subunit and shifts the equilibrium between 70S ribosomes and their 50S and 30S subunits in favor of the free subunits, thus enhancing the availability of 30S subunits on which protein synthesis initiation begins. The polypeptide is Translation initiation factor IF3-1, mitochondrial (Arabidopsis thaliana (Mouse-ear cress)).